Here is a 611-residue protein sequence, read N- to C-terminus: Threonine--tRNA ligase (611 aa).

The interval 1-25 (MAGPDRKPVSSAAATTPAPSAPVVL) is disordered. Over residues 9–24 (VSSAAATTPAPSAPVV) the composition is skewed to low complexity. The interval 209–502 (DHRRIGKDLD…MTENYAGDYP (294 aa)) is catalytic. The Zn(2+) site is built by C302, H353, and H479.

The protein belongs to the class-II aminoacyl-tRNA synthetase family. As to quaternary structure, homodimer. It depends on Zn(2+) as a cofactor.

It localises to the cytoplasm. The catalysed reaction is tRNA(Thr) + L-threonine + ATP = L-threonyl-tRNA(Thr) + AMP + diphosphate + H(+). In terms of biological role, catalyzes the attachment of threonine to tRNA(Thr) in a two-step reaction: L-threonine is first activated by ATP to form Thr-AMP and then transferred to the acceptor end of tRNA(Thr). Also edits incorrectly charged L-seryl-tRNA(Thr). The protein is Threonine--tRNA ligase of Parasynechococcus marenigrum (strain WH8102).